Here is a 232-residue protein sequence, read N- to C-terminus: Large ribosomal subunit protein uL1 (232 aa).

This sequence belongs to the universal ribosomal protein uL1 family. As to quaternary structure, part of the 50S ribosomal subunit.

In terms of biological role, binds directly to 23S rRNA. The L1 stalk is quite mobile in the ribosome, and is involved in E site tRNA release. Its function is as follows. Protein L1 is also a translational repressor protein, it controls the translation of the L11 operon by binding to its mRNA. This Bartonella quintana (strain Toulouse) (Rochalimaea quintana) protein is Large ribosomal subunit protein uL1.